Here is a 285-residue protein sequence, read N- to C-terminus: Diaminopimelate epimerase (285 aa).

Residues Asn-15 and Asn-68 each contribute to the substrate site. The Proton donor role is filled by Cys-77. Residues 78 to 79 (GN), Asn-165, Asn-201, and 219 to 220 (ER) each bind substrate. Residue Cys-228 is the Proton acceptor of the active site. 229–230 (GT) is a binding site for substrate.

Belongs to the diaminopimelate epimerase family. Homodimer.

It is found in the cytoplasm. It catalyses the reaction (2S,6S)-2,6-diaminopimelate = meso-2,6-diaminopimelate. It participates in amino-acid biosynthesis; L-lysine biosynthesis via DAP pathway; DL-2,6-diaminopimelate from LL-2,6-diaminopimelate: step 1/1. In terms of biological role, catalyzes the stereoinversion of LL-2,6-diaminopimelate (L,L-DAP) to meso-diaminopimelate (meso-DAP), a precursor of L-lysine and an essential component of the bacterial peptidoglycan. In Synechococcus sp. (strain JA-2-3B'a(2-13)) (Cyanobacteria bacterium Yellowstone B-Prime), this protein is Diaminopimelate epimerase.